A 224-amino-acid chain; its full sequence is MDYIKKAIWGPDPKEQQRRIRSVLRKNGRNIEKSLRELTVLQNKTQQLIKKSAKKNDVRTVRLYAKELYQINKQYDRMYTSRAQLDSVRMKIDEAIRMNTLSNQMADSAGLMREVNSLVRLPQLRNTMIELEKELMKSGIISEMVDDTMESVGDVGEEMDEAVDEEVNKIVEQYTNEKFKNVDQVPTVELAANEEEQEIPDEKVDEEADRMVNEMRERLRALQN.

A Glycyl lysine isopeptide (Lys-Gly) (interchain with G-Cter in ubiquitin) cross-link involves residue K203.

It belongs to the SNF7 family. In terms of assembly, core component of the ESCRT-III complex (endosomal sorting required for transport complex III). ESCRT-III appears to be sequentially assembled as a flat lattice on the endosome membrane and forms a transient 450 kDa complex that contains DID4, oligomerized SNF7, VPS20 and VPS24. SNF7 oligomerization into a membrane-associated filament is nucleated by association of SNF7 with VPS20; the process is terminated through association of VPS24, possibly by capping the SNF7 filament. VPS24 subsequently associates with DID4/VPS2. Interacts with the VPS4. Interacts with DID2.

It is found in the endosome membrane. The protein resides in the endomembrane system. Functionally, class E VPS protein implicated in concentration and sorting of cargo proteins of the multivesicular body (MVB) for incorporation into intralumenal vesicles. The lumenal sequestrated membrane proteins will be targeted into the vacuole after fusion of the endosome with the vacuole. Acts a component of the ESCRT-III complex, which appears to be critical for late steps in MVB sorting, such as membrane invagination and final cargo sorting and recruitment oflate-acting components of the sorting machinery. The MVB pathway requires the sequential function of ESCRT-O, -I,-II and -III complex assemblies. The DID4/VPS2-VPS24 subcomplex is required for the VPS4-dependent dissociation of ESCRT-III. The polypeptide is Vacuolar protein-sorting-associated protein 24 (VPS24) (Saccharomyces cerevisiae (strain ATCC 204508 / S288c) (Baker's yeast)).